Here is a 502-residue protein sequence, read N- to C-terminus: Probable cytosol aminopeptidase (502 aa).

Mn(2+)-binding residues include K267 and D272. K279 is a catalytic residue. Residues D290, D349, and E351 each contribute to the Mn(2+) site. Residue R353 is part of the active site.

It belongs to the peptidase M17 family. Requires Mn(2+) as cofactor.

The protein resides in the cytoplasm. The enzyme catalyses Release of an N-terminal amino acid, Xaa-|-Yaa-, in which Xaa is preferably Leu, but may be other amino acids including Pro although not Arg or Lys, and Yaa may be Pro. Amino acid amides and methyl esters are also readily hydrolyzed, but rates on arylamides are exceedingly low.. The catalysed reaction is Release of an N-terminal amino acid, preferentially leucine, but not glutamic or aspartic acids.. Its function is as follows. Presumably involved in the processing and regular turnover of intracellular proteins. Catalyzes the removal of unsubstituted N-terminal amino acids from various peptides. This is Probable cytosol aminopeptidase from Aeromonas hydrophila subsp. hydrophila (strain ATCC 7966 / DSM 30187 / BCRC 13018 / CCUG 14551 / JCM 1027 / KCTC 2358 / NCIMB 9240 / NCTC 8049).